The sequence spans 273 residues: MANCFVGDIQGCYDDLRRLLDLAEFDPANDVLWLCGDLVARGPDSLNTLRFVKGLGNRAVTVLGNHDLHLLAVADGVAPLKKKDKLQELMEAPDRDELLEWLRHRPLLAEHPDLPIMMVHAGISPAWDARTARNCAREVESLLRGDQYQWLLHNMYGDQPDGWQDDLVGIERYRYIINTFTRMRFCYFDGRLDFKCKKGPKESTPGLRPWFEQREHHVDDPILVFGHWAALMGNTGKQDIKALDTGCVWGNSLTLWRYEDDALIATPCPTYAK.

Belongs to the Ap4A hydrolase family.

The enzyme catalyses P(1),P(4)-bis(5'-adenosyl) tetraphosphate + H2O = 2 ADP + 2 H(+). In terms of biological role, hydrolyzes diadenosine 5',5'''-P1,P4-tetraphosphate to yield ADP. The chain is Bis(5'-nucleosyl)-tetraphosphatase, symmetrical from Aeromonas hydrophila subsp. hydrophila (strain ATCC 7966 / DSM 30187 / BCRC 13018 / CCUG 14551 / JCM 1027 / KCTC 2358 / NCIMB 9240 / NCTC 8049).